The sequence spans 207 residues: MARCKS-related protein 1-B (207 aa).

Composition is skewed to low complexity over residues 1 to 25 and 63 to 77; these read MGSQ…AAVK and AGAG…AAEG. The interval 1–207 is disordered; the sequence is MGSQASKGGV…STPAPSEQKE (207 aa). The N-myristoyl glycine moiety is linked to residue Gly-2. The segment covering 78–90 has biased composition (basic and acidic residues); it reads EAAKPEGEATKET. An effector domain involved in lipid-binding region spans residues 93–116; sequence KKKKKFSLKNSFKFKGISLKKSKK. Residues 100–109 show a composition bias toward low complexity; it reads LKNSFKFKGI. Composition is skewed to basic and acidic residues over residues 131 to 154 and 163 to 182; these read TEEK…KAEE and PKAE…KEEA. Residues 195 to 207 are compositionally biased toward polar residues; that stretch reads ETNSTPAPSEQKE.

It belongs to the MARCKS family. As to expression, strongly expressed in brain and eye. Also detected at lower levels in muscle.

The protein localises to the cytoplasm. It localises to the cytoskeleton. Its subcellular location is the cell membrane. In terms of biological role, involved in the control of cell movement by regulating actin cytoskeleton homeostasis and filopodium and lamellipodium formation. This Danio rerio (Zebrafish) protein is MARCKS-related protein 1-B.